A 304-amino-acid chain; its full sequence is Cell surface-binding protein OPG105 (304 aa).

The Alpha-carbonic anhydrase domain maps to 1 to 235 (MPQQLSPINI…NDDTQVYYSG (235 aa)). The Virion surface segment spans residues 1–275 (MPQQLSPINI…YQKYIEGNKT (275 aa)). Residues 276–294 (FAIIAIVFVFILTAILFLM) traverse the membrane as a helical segment. At 295-304 (SRRYSREKQN) the chain is on the intravirion side.

This sequence belongs to the alpha-carbonic anhydrase family. As to quaternary structure, homodimer; disulfide-linked. Post-translationally, apparently non-glycosylated.

It is found in the virion membrane. In terms of biological role, binds to chondroitin sulfate on the cell surface to provide virion attachment to target cell. This is Cell surface-binding protein OPG105 (OPG105) from Rabbitpox virus (strain Utrecht) (RPV).